A 304-amino-acid polypeptide reads, in one-letter code: Tyrosine recombinase XerD (304 aa).

The 86-residue stretch at 6 to 91 folds into the Core-binding (CB) domain; the sequence is EPWRKTLETF…AIRSFHKFLL (86 aa). Residues 112–298 enclose the Tyr recombinase domain; sequence YLPSVLTIEE…DRSFIKEVHK (187 aa). Active-site residues include Arg-155, Lys-179, His-250, Arg-253, and His-276. Residue Tyr-285 is the O-(3'-phospho-DNA)-tyrosine intermediate of the active site.

This sequence belongs to the 'phage' integrase family. XerD subfamily. Forms a cyclic heterotetrameric complex composed of two molecules of XerC and two molecules of XerD.

The protein localises to the cytoplasm. Functionally, site-specific tyrosine recombinase, which acts by catalyzing the cutting and rejoining of the recombining DNA molecules. The XerC-XerD complex is essential to convert dimers of the bacterial chromosome into monomers to permit their segregation at cell division. It also contributes to the segregational stability of plasmids. The protein is Tyrosine recombinase XerD of Chlorobaculum tepidum (strain ATCC 49652 / DSM 12025 / NBRC 103806 / TLS) (Chlorobium tepidum).